We begin with the raw amino-acid sequence, 403 residues long: 4-hydroxy-3-methylbut-2-en-1-yl diphosphate synthase (flavodoxin) (403 aa).

A compositionally biased stretch (basic and acidic residues) spans 1-16 (MNTENPIEKPFRKTGD). The disordered stretch occupies residues 1-31 (MNTENPIEKPFRKTGDPVDLTSESPLHPRRK). 4 residues coordinate [4Fe-4S] cluster: Cys291, Cys294, Cys326, and Glu333.

The protein belongs to the IspG family. [4Fe-4S] cluster serves as cofactor.

The catalysed reaction is (2E)-4-hydroxy-3-methylbut-2-enyl diphosphate + oxidized [flavodoxin] + H2O + 2 H(+) = 2-C-methyl-D-erythritol 2,4-cyclic diphosphate + reduced [flavodoxin]. It functions in the pathway isoprenoid biosynthesis; isopentenyl diphosphate biosynthesis via DXP pathway; isopentenyl diphosphate from 1-deoxy-D-xylulose 5-phosphate: step 5/6. Converts 2C-methyl-D-erythritol 2,4-cyclodiphosphate (ME-2,4cPP) into 1-hydroxy-2-methyl-2-(E)-butenyl 4-diphosphate. This chain is 4-hydroxy-3-methylbut-2-en-1-yl diphosphate synthase (flavodoxin), found in Bifidobacterium longum (strain NCC 2705).